Reading from the N-terminus, the 148-residue chain is 3-dehydroquinate dehydratase 2 (148 aa).

Residue tyrosine 24 is the Proton acceptor of the active site. Asparagine 75, histidine 81, and aspartate 88 together coordinate substrate. Catalysis depends on histidine 101, which acts as the Proton donor. Substrate is bound by residues 102–103 and arginine 112; that span reads LS.

This sequence belongs to the type-II 3-dehydroquinase family. In terms of assembly, homododecamer.

The enzyme catalyses 3-dehydroquinate = 3-dehydroshikimate + H2O. It functions in the pathway metabolic intermediate biosynthesis; chorismate biosynthesis; chorismate from D-erythrose 4-phosphate and phosphoenolpyruvate: step 3/7. Catalyzes a trans-dehydration via an enolate intermediate. The polypeptide is 3-dehydroquinate dehydratase 2 (aroQ2) (Pseudomonas aeruginosa (strain ATCC 15692 / DSM 22644 / CIP 104116 / JCM 14847 / LMG 12228 / 1C / PRS 101 / PAO1)).